The primary structure comprises 192 residues: UPF0301 protein Bcep1808_0798 (192 aa).

Belongs to the UPF0301 (AlgH) family.

The polypeptide is UPF0301 protein Bcep1808_0798 (Burkholderia vietnamiensis (strain G4 / LMG 22486) (Burkholderia cepacia (strain R1808))).